Here is a 778-residue protein sequence, read N- to C-terminus: Beta-phellandrene synthase (neryl-diphosphate-cyclizing), chloroplastic (778 aa).

A chloroplast-targeting transit peptide spans 1-36; it reads MIVGYRSTIITLSHPKLGNGKTISSNAIFQRSCRVR. Positions 531, 676, and 684 each coordinate Mg(2+). The DDXXD motif motif lies at 531–535; sequence DDHFE.

It belongs to the terpene synthase family. Tpse subfamily. It depends on Mg(2+) as a cofactor. In terms of tissue distribution, trichomes.

It is found in the plastid. The protein resides in the chloroplast. It catalyses the reaction neryl diphosphate = beta-phellandrene + diphosphate. Monoterpene synthase catalyzing the production of beta-phellandrene from neryl diphosphate. Also produces lower amounts of delta-2-carene, alpha-phellandrene and limonene. When incubated in vitro with geranyl diphosphate, catalyzes the formation of acyclic myrcene and ocimene as major products in addition to beta-phellandrene. This is Beta-phellandrene synthase (neryl-diphosphate-cyclizing), chloroplastic (PHS1) from Solanum lycopersicum (Tomato).